A 640-amino-acid chain; its full sequence is Threonine--tRNA ligase (640 aa).

The region spanning 1 to 61 (MPVITLPDGS…SNDATLQIIT (61 aa)) is the TGS domain. The catalytic stretch occupies residues 242-533 (DHRKIGKQLD…LIEHYAGVFP (292 aa)). The Zn(2+) site is built by cysteine 333, histidine 384, and histidine 510.

This sequence belongs to the class-II aminoacyl-tRNA synthetase family. As to quaternary structure, homodimer. The cofactor is Zn(2+).

It is found in the cytoplasm. It catalyses the reaction tRNA(Thr) + L-threonine + ATP = L-threonyl-tRNA(Thr) + AMP + diphosphate + H(+). In terms of biological role, catalyzes the attachment of threonine to tRNA(Thr) in a two-step reaction: L-threonine is first activated by ATP to form Thr-AMP and then transferred to the acceptor end of tRNA(Thr). Also edits incorrectly charged L-seryl-tRNA(Thr). This is Threonine--tRNA ligase from Pseudomonas putida (strain ATCC 700007 / DSM 6899 / JCM 31910 / BCRC 17059 / LMG 24140 / F1).